Here is a 403-residue protein sequence, read N- to C-terminus: Tripartite motif-containing protein 59 (403 aa).

Residues 10-60 form an RING-type zinc finger; sequence CPICYSIFEDPRVLPCSHTFCRNCLENILQASGNFYIWRPLRIPLKCPNCR. Residues 92 to 134 form a B box-type zinc finger; that stretch reads PDIVTCPEHYRQPLNVYCLLDKKLVCGHCLTIGQHHGHPIDDL. Zn(2+) contacts are provided by C97, H100, C120, and H126. A coiled-coil region spans residues 163–246; that stretch reads LIEKLKEQKS…ALTISLQEES (84 aa). Residues 329 to 349 traverse the membrane as a helical segment; it reads ILNIVVVTLISVILMSILFFN.

Belongs to the TRIM/RBCC family. As to quaternary structure, interacts with ECSIT.

It is found in the endoplasmic reticulum membrane. It carries out the reaction S-ubiquitinyl-[E2 ubiquitin-conjugating enzyme]-L-cysteine + [acceptor protein]-L-lysine = [E2 ubiquitin-conjugating enzyme]-L-cysteine + N(6)-ubiquitinyl-[acceptor protein]-L-lysine.. It participates in protein modification; protein ubiquitination. Functionally, E3 ubiquitin ligase involved in different processes such as development and immune response. Serves as a negative regulator for innate immune signaling pathways by suppressing RLR-induced activation of IRF3/7 and NF-kappa-B via interaction with adapter ECSIT. Regulates autophagy through modulating both the transcription and the ubiquitination of BECN1. On the one hand, regulates the transcription of BECN1 through negatively modulating the NF-kappa-B pathway. On the other hand, regulates TRAF6-mediated 'Lys-63'-linked ubiquitination of BECN1, thus affecting the formation of the BECN1-PIK3C3 complex. In addition, mediates 'Lys-48'-linked ubiquitination of TRAF6 and thereby promotes TRAF6 proteasomal degradation. Also acts as a critical regulator for early embryo development from blastocyst stage to gastrula through modulating F-actin assembly and WASH1 'Lys-63'-linked ubiquitination. The chain is Tripartite motif-containing protein 59 (TRIM59) from Homo sapiens (Human).